The primary structure comprises 182 residues: UPF0397 protein BcerKBAB4_2500 (182 aa).

The next 5 helical transmembrane spans lie at 9 to 29 (VVAI…GFSI), 40 to 60 (AILT…IGLI), 71 to 91 (WGIW…MGLI), 114 to 134 (IAGL…DIIV), and 142 to 162 (IVIQ…VLGL).

The protein belongs to the UPF0397 family.

It is found in the cell membrane. This chain is UPF0397 protein BcerKBAB4_2500, found in Bacillus mycoides (strain KBAB4) (Bacillus weihenstephanensis).